The sequence spans 206 residues: Large ribosomal subunit protein uL4 (206 aa).

Residues 44–87 form a disordered region; it reads KRQGTHATKTRGMKRGGGAKPWRQKGTGRARAGSTRSPLWRGGG.

It belongs to the universal ribosomal protein uL4 family. As to quaternary structure, part of the 50S ribosomal subunit.

Its function is as follows. One of the primary rRNA binding proteins, this protein initially binds near the 5'-end of the 23S rRNA. It is important during the early stages of 50S assembly. It makes multiple contacts with different domains of the 23S rRNA in the assembled 50S subunit and ribosome. Forms part of the polypeptide exit tunnel. This chain is Large ribosomal subunit protein uL4, found in Maridesulfovibrio salexigens (strain ATCC 14822 / DSM 2638 / NCIMB 8403 / VKM B-1763) (Desulfovibrio salexigens).